Consider the following 1719-residue polypeptide: Sodium channel protein type 4 subunit alpha B (1719 aa).

The Cytoplasmic segment spans residues 1 to 126 (MRTLLPPVGS…IVAIKILIHS (126 aa)). The disordered stretch occupies residues 28-50 (QQIREEERKRTNAQVSEELPEPA). An I repeat occupies 108 to 431 (LLSPFNALRI…VVAMAYAEQN (324 aa)). A helical transmembrane segment spans residues 127–145 (LFSLFIMATILTNCAFMTL). The Extracellular segment spans residues 146-152 (SDPPAWS). Residues 153 to 173 (KTMEYVFTFIYTFEATIKILS) traverse the membrane as a helical segment. Residues 174-187 (RGFCVGKFTFLKDP) lie on the Cytoplasmic side of the membrane. A helical membrane pass occupies residues 188–205 (WNWLDFMVISMAYLTELV). At 206-211 (DLGNVS) the chain is on the extracellular side. A glycan (N-linked (GlcNAc...) asparagine) is linked at Asn209. Residues 212-228 (VLRTFRVLRALKTITVI) form a helical membrane-spanning segment. Topologically, residues 229 to 247 (PGLKTIVGALIQSVRKLAD) are cytoplasmic. A helical membrane pass occupies residues 248–267 (AMVLTVFCLSVFALIGLQLF). At 268 to 368 (MGNLRQKCVL…PNYGYTSYDS (101 aa)) the chain is on the extracellular side. An intrachain disulfide couples Cys275 to Cys337. Asn285 and Asn339 each carry an N-linked (GlcNAc...) asparagine glycan. A disulfide bridge connects residues Cys346 and Cys352. An intramembrane region (pore-forming) is located at residues 369–393 (FGWAFLALFRLMTQDFWENLFQLTL). Residues 394–400 (RTAGKTY) lie on the Extracellular side of the membrane. A helical transmembrane segment spans residues 401–421 (MIFFVVVIFLGSFYLINLILA). Residues 422–513 (VVAMAYAEQN…ECLYAIVMDP (92 aa)) lie on the Cytoplasmic side of the membrane. The II repeat unit spans residues 495-766 (CCGCWRHLKE…QIAINRINRA (272 aa)). Residues 514-532 (FVDLGITICIILNTVFMAM) form a helical membrane-spanning segment. Residues 533 to 543 (EHYPMSADFEE) lie on the Extracellular side of the membrane. Residues 544–563 (LLSVGNLVFTGIFTGEMVFK) traverse the membrane as a helical segment. The Cytoplasmic segment spans residues 564–577 (ILAMDPYFYFQVGW). A helical membrane pass occupies residues 578-597 (NIFDSIIVTISLVELGLANV). Residues 598 to 599 (QG) are Extracellular-facing. A helical membrane pass occupies residues 600 to 617 (LSVLRSFRLMRVFKLAKS). The Cytoplasmic segment spans residues 618–633 (WPTLNMLIKIIGNSVG). Residues 634-652 (ALGNLTLVLAIIVFIFAVV) form a helical membrane-spanning segment. The Extracellular segment spans residues 653–681 (GMQLFGKNYKDCVCRISEDCVLPRWHMND). Cys666 and Cys672 are disulfide-bonded. Positions 682 to 702 (FFHAFLIIFRVLCGEWIESMW) form an intramembrane region, pore-forming. The Extracellular portion of the chain corresponds to 703 to 713 (DCMEVSGQTMC). A disulfide bridge connects residues Cys704 and Cys713. The helical transmembrane segment at 714-732 (LIVFMMVLVIGNLVVLNLF) threads the bilayer. The Cytoplasmic portion of the chain corresponds to 733 to 919 (LALLLSSFSG…TCFSIVENNY (187 aa)). The segment covering 834–845 (SDSDDSDYDEDK) has biased composition (acidic residues). The tract at residues 834 to 862 (SDSDDSDYDEDKDSQCDESSVCSSVQKPE) is disordered. The III repeat unit spans residues 900 to 1215 (RGKIWCNIRR…KKYYNAMKKL (316 aa)). A helical membrane pass occupies residues 920–937 (FESFIVFMILLSSGALAF). Over 938-950 (EDIYLEKHQLIKS) the chain is Extracellular. Residues 951 to 969 (ILEYADKVFTYVFVMEMVL) traverse the membrane as a helical segment. At 970–983 (KWFAYGFKSYFSNA) the chain is on the cytoplasmic side. A helical membrane pass occupies residues 984 to 1002 (WCWLDFLIVDVSLVSLTAN). Residues 1003-1010 (ILGYSELG) lie on the Extracellular side of the membrane. Residues 1011–1029 (AIKSLRTLRALRPLRALSR) form a helical membrane-spanning segment. Residues 1030–1046 (FEGMRVVVNALVGAVPS) are Cytoplasmic-facing. The helical transmembrane segment at 1047-1066 (IFNVLLVCLIFWLIFSIMGV) threads the bilayer. Over 1067 to 1119 (NLFAGKFSYCFNETSQEIIDTKVVDNKTECIALIKANFTEVRWKNVKVNYDNV) the chain is Extracellular. A disulfide bond links Cys1076 and Cys1096. N-linked (GlcNAc...) asparagine glycans are attached at residues Asn1078 and Asn1092. Residues 1120-1141 (GIGYLSLLQVATFKGWTDIMYA) constitute an intramembrane region (pore-forming). At 1142–1158 (AVDSRDVESQPIYEVNL) the chain is on the extracellular side. A helical membrane pass occupies residues 1159–1180 (YMYLYFVIFIIFGSFFTLNLFI). At 1181–1243 (GVIIDNFNQQ…LVFDLVTKQI (63 aa)) the chain is on the cytoplasmic side. Residues 1199-1201 (IFM) are important for rapid channel inactivation. An IV repeat occupies 1224–1521 (VPRPENPFQG…WEKFDPDASQ (298 aa)). Residues 1244–1261 (FDVFIMVLICLNMVTMMV) form a helical membrane-spanning segment. Topologically, residues 1262–1272 (ETDEQSDKKEE) are extracellular. A helical membrane pass occupies residues 1273-1291 (VLYWINVVFILIFTTECTL). The Cytoplasmic portion of the chain corresponds to 1292 to 1303 (KIIALRRHYFSI). The chain crosses the membrane as a helical span at residues 1304–1321 (GWNIFDFVVVILSILGLL). At 1322–1334 (LADIIEKYFVSPT) the chain is on the extracellular side. Residues 1335–1351 (LFRVIRLARIGRVLRLI) traverse the membrane as a helical segment. The Cytoplasmic segment spans residues 1352-1370 (RGAKGIRTLLFALMMSLPA). The chain crosses the membrane as a helical span at residues 1371–1388 (LFNIGLLLFLIMFIFSIF). Residues 1389–1410 (GMSNFAYVKKEALIDDMFNFET) are Extracellular-facing. The segment at residues 1411-1433 (FGNSMICLFMITTSAGWDGLLSP) is an intramembrane region (pore-forming). Residues 1434-1462 (IMNTPPDCDPNVENPGTTVRGNCGSPAIG) are Extracellular-facing. Cys1441 and Cys1456 are joined by a disulfide. Residues 1463–1485 (IAFFSTYIIMSFLVVVNMFIAII) traverse the membrane as a helical segment. Residues 1486-1719 (LENFNVATEE…QERDQRETSV (234 aa)) are Cytoplasmic-facing. One can recognise an IQ domain in the interval 1615–1644 (EEVAATVIQRAYRKYLLLRTVRLASFMYRE).

It belongs to the sodium channel (TC 1.A.1.10) family. Nav1.4/SCN4A subfamily. As to quaternary structure, voltage-gated sodium (Nav) channels consist of an ion-conducting alpha subunit which is functional on its own associated with regulatory beta subunits.

Its subcellular location is the cell membrane. The enzyme catalyses Na(+)(in) = Na(+)(out). Functionally, pore-forming subunit of a voltage-gated sodium (Nav) channel that directly mediates the depolarizing phase of action potentials in excitable membranes. Navs, also called VGSCs (voltage-gated sodium channels) or VDSCs (voltage-dependent sodium channels), operate by switching between closed and open conformations depending on the voltage difference across the membrane. In the open conformation they allow Na(+) ions to selectively pass through the pore, along their electrochemical gradient. The influx of Na+ ions provokes membrane depolarization, initiating the propagation of electrical signals throughout cells and tissues. The sequence is that of Sodium channel protein type 4 subunit alpha B (scn4ab) from Takifugu rubripes (Japanese pufferfish).